A 648-amino-acid chain; its full sequence is Transcriptional regulator ManR (648 aa).

2 consecutive PRD domains span residues 187–292 (KFLH…YPLQ) and 297–404 (LENA…MQGS). A phosphohistidine; by HPr mark is found at His-222, His-281, His-334, and His-393. Positions 409-500 (KKAVIVCHMG…FIRQLGESHR (92 aa)) constitute a PTS EIIB type-2 domain. Cys-415 carries the phosphocysteine; by EIIA modification. The PTS EIIA type-2 domain maps to 510–648 (NNTTPFLVFL…VMTFLSHLDY (139 aa)). At His-570 the chain carries Phosphohistidine; by EIIB.

This sequence belongs to the transcriptional antiterminator BglG family.

The enzyme catalyses D-mannose(out) + N(pros)-phospho-L-histidyl-[protein] = D-mannose 6-phosphate(in) + L-histidyl-[protein]. Its activity is regulated as follows. The regulatory activity of ManR is modulated by phosphorylation and dephosphorylation of the various ManR domains. It becomes activated via phosphoryl group transfer from PEP, EI and HPr on the two conserved histidine residues in the PRD 2 domain, whereas phosphorylation of the EIIA-like domain on His-570 by the PTS EIIB-Man domain of ManP inactivates ManR. Positively regulates the expression of the mannose operon that consists of three genes, manP, manA, and yjdF, which are responsible for the transport and utilization of mannose. Also activates its own expression. The chain is Transcriptional regulator ManR (manR) from Bacillus subtilis (strain 168).